The following is a 417-amino-acid chain: Tol-Pal system protein TolB (417 aa).

An N-terminal signal peptide occupies residues Met-1–Ala-16.

Belongs to the TolB family. The Tol-Pal system is composed of five core proteins: the inner membrane proteins TolA, TolQ and TolR, the periplasmic protein TolB and the outer membrane protein Pal. They form a network linking the inner and outer membranes and the peptidoglycan layer.

Its subcellular location is the periplasm. In terms of biological role, part of the Tol-Pal system, which plays a role in outer membrane invagination during cell division and is important for maintaining outer membrane integrity. The protein is Tol-Pal system protein TolB of Helicobacter pylori (strain HPAG1).